A 238-amino-acid chain; its full sequence is Cysteine-rich venom protein 2 (238 aa).

The signal sequence occupies residues 1–19 (MIAFIVLLSLAAVLQQSSG). Positions 38–164 (VDKHNALRRS…STKYLYVCQY (127 aa)) constitute an SCP domain. Disulfide bonds link Cys75/Cys153, Cys92/Cys165, Cys148/Cys162, Cys184/Cys191, Cys187/Cys196, Cys200/Cys233, Cys209/Cys227, and Cys218/Cys231. Residues 200–233 (CEYEDAYTNCNDLVKERKCQTEWIKSQCPATCFC) form the ShKT domain.

The protein belongs to the CRISP family. Expressed by the venom gland.

It localises to the secreted. Blocks contraction of smooth muscle elicited by high potassium-induced depolarization, but does not block caffeine-stimulated contraction. May target voltage-gated calcium channels (Cav) on smooth muscle. The sequence is that of Cysteine-rich venom protein 2 from Hydrophis hardwickii (Hardwick's spine-bellied seasnake).